Consider the following 290-residue polypeptide: Putative neuropeptide Y receptor type 6 (290 aa).

Residues Met1–Cys39 lie on the Extracellular side of the membrane. N-linked (GlcNAc...) asparagine glycosylation occurs at Asn11. The chain crosses the membrane as a helical span at residues Ile40–Ile60. The Cytoplasmic portion of the chain corresponds to Phe61–Thr83. A helical membrane pass occupies residues Leu84–Phe104. The Extracellular segment spans residues Gly105–Leu111. The cysteines at positions 109 and 196 are disulfide-linked. Residues Thr112–Val132 traverse the membrane as a helical segment. Over Glu133 to His150 the chain is Cytoplasmic. A helical membrane pass occupies residues Ala151–Leu171. Residues Ser172 to Arg206 lie on the Extracellular side of the membrane. A helical transmembrane segment spans residues Leu207 to Ile227. Residues Cys228 to Arg258 are Cytoplasmic-facing. Residues Ile259–Ser279 traverse the membrane as a helical segment. Residues Ser280–Cys290 lie on the Extracellular side of the membrane.

This sequence belongs to the G-protein coupled receptor 1 family. Expressed in heart, skeletal muscle, gastrointestinal tissues, spleen, brain and adrenal glands.

Its subcellular location is the membrane. Functionally, when expressed, is unable to bind pancreatic polypeptide (PP), neuropeptide Y (NPY), or peptide YY (PYY), suggesting that either it is functionally inactive or that it may have acquired a pancreatic polypeptide-independent function. The chain is Putative neuropeptide Y receptor type 6 (NPY6R) from Homo sapiens (Human).